Here is a 406-residue protein sequence, read N- to C-terminus: Peptide antibiotic transporter SbmA (406 aa).

Residues 1–11 lie on the Periplasmic side of the membrane; sequence MFKSFFPKPGT. The chain crosses the membrane as a helical span at residues 12–32; the sequence is FFLSAFVWALIAVIFWQAGGG. Topologically, residues 33–56 are cytoplasmic; that stretch reads DWVARITGASGQIPISAARFWSLD. A helical transmembrane segment spans residues 57–77; it reads FLIFYAYYIVCVGLFALFWFI. Over 78-87 the chain is Periplasmic; the sequence is YSPHRWQYWS. The helical transmembrane segment at 88–108 threads the bilayer; that stretch reads ILGTALIIFVTWFLVEVGVAV. At 109-137 the chain is on the cytoplasmic side; that stretch reads NAWYAPFYDLIQTALSSPHKVTIEQFYRE. The helical transmembrane segment at 138–158 threads the bilayer; the sequence is VGVFLGIALIAVVISVLNNFF. The Periplasmic segment spans residues 159–205; sequence VSHYVFRWRTAMNEYYMANWQQLRHIEGAAQRVQEDTMRFASTLENM. The helical transmembrane segment at 206-226 threads the bilayer; the sequence is GVSFINAIMTLIAFLPVLVTL. The Cytoplasmic portion of the chain corresponds to 227–242; the sequence is SAHVPELPIIGHIPYG. A helical transmembrane segment spans residues 243 to 263; the sequence is LVIAAIVWSLMGTGLLAVVGI. Residues 264 to 331 lie on the Periplasmic side of the membrane; that stretch reads KLPGLEFKNQ…ARILYLQVDN (68 aa). Residues 332–352 form a helical membrane-spanning segment; it reads VFGLFLLFPSIVAGTITLGLM. The Cytoplasmic portion of the chain corresponds to 353–406; sequence TQITNVFGQVRGAFQYLINSWTTLVELMSIYKRLRSFEHELDGDKIQEVTHTLS.

This sequence belongs to the peptide uptake permease (PUP) (TC 9.A.18) family.

It localises to the cell inner membrane. Its function is as follows. Uptake of antimicrobial peptides. The chain is Peptide antibiotic transporter SbmA (sbmA) from Escherichia coli O157:H7.